The following is a 109-amino-acid chain: Oncomodulin (109 aa).

Serine 2 is subject to N-acetylserine. EF-hand domains are found at residues 39–74 (MSAS…FQSD) and 78–109 (LTES…MVHS). Residues aspartate 52, aspartate 54, serine 56, tyrosine 58, glutamate 63, aspartate 91, aspartate 93, aspartate 95, lysine 97, and glutamate 102 each contribute to the Ca(2+) site. Positions 82-109 (ETKSLMDAADNDGDGKIGADEFQEMVHS) are disordered. The segment covering 94-109 (GDGKIGADEFQEMVHS) has biased composition (basic and acidic residues).

Belongs to the parvalbumin family. Found in tumor tissues and not detected in normal tissues.

Its function is as follows. Has some calmodulin-like activity with respect to enzyme activation and growth regulation. Binds two calcium ions. This is Oncomodulin (Ocm) from Mus musculus (Mouse).